A 324-amino-acid polypeptide reads, in one-letter code: Olfactory receptor 5A2 (324 aa).

Topologically, residues 1-26 (MAVGRNNTIVTKFILLGLSDHPQMKI) are extracellular. An N-linked (GlcNAc...) asparagine glycan is attached at Asn-6. A helical transmembrane segment spans residues 27–47 (FLFMLFLGLYLLTLAWNLSLI). Residues 48–55 (ALIKMDSH) are Cytoplasmic-facing. The helical transmembrane segment at 56-76 (LHMPMYFFLSNLSFLDICYVS) threads the bilayer. Topologically, residues 77–100 (STAPKMLSDIITEQKTISFVGCAT) are extracellular. The cysteines at positions 98 and 190 are disulfide-linked. Residues 101–121 (QYFVFCGMGLTECFLLAAMAY) form a helical membrane-spanning segment. At 122-134 (DRYAAICNPLLYT) the chain is on the cytoplasmic side. The chain crosses the membrane as a helical span at residues 135-155 (VLISHTLCLKMVVGAYVGGFL). The Extracellular portion of the chain corresponds to 156–197 (SSFIETYSVYQHDFCGPYMINHFFCDLPPVLALSCSDTFTSE). A helical membrane pass occupies residues 198 to 218 (VVTFIVSVVVGIVSVLVVLIS). The Cytoplasmic portion of the chain corresponds to 219–238 (YGYIVAAVVKISSATGRTKA). A helical membrane pass occupies residues 239–259 (FSTCASHLTAVTLFYGSGFFM). The Extracellular segment spans residues 260–272 (YMRPSSSYSLNRD). A helical membrane pass occupies residues 273–293 (KVVSIFYALVIPVVNPIIYSF). The Cytoplasmic segment spans residues 294-324 (RNKEIKNAMRKAMERDPGISHGGPFIFMTLG).

This sequence belongs to the G-protein coupled receptor 1 family.

It is found in the cell membrane. Odorant receptor. The protein is Olfactory receptor 5A2 (OR5A2) of Homo sapiens (Human).